The following is a 206-amino-acid chain: Large ribosomal subunit protein uL4 (206 aa).

It belongs to the universal ribosomal protein uL4 family. In terms of assembly, part of the 50S ribosomal subunit.

Its function is as follows. One of the primary rRNA binding proteins, this protein initially binds near the 5'-end of the 23S rRNA. It is important during the early stages of 50S assembly. It makes multiple contacts with different domains of the 23S rRNA in the assembled 50S subunit and ribosome. Functionally, forms part of the polypeptide exit tunnel. The sequence is that of Large ribosomal subunit protein uL4 from Jannaschia sp. (strain CCS1).